The chain runs to 282 residues: Bis(5'-nucleosyl)-tetraphosphatase, symmetrical (282 aa).

This sequence belongs to the Ap4A hydrolase family.

It catalyses the reaction P(1),P(4)-bis(5'-adenosyl) tetraphosphate + H2O = 2 ADP + 2 H(+). Hydrolyzes diadenosine 5',5'''-P1,P4-tetraphosphate to yield ADP. The chain is Bis(5'-nucleosyl)-tetraphosphatase, symmetrical from Salmonella agona (strain SL483).